Reading from the N-terminus, the 131-residue chain is Small ribosomal subunit protein uS11 (131 aa).

Belongs to the universal ribosomal protein uS11 family. As to quaternary structure, part of the 30S ribosomal subunit. Interacts with proteins S7 and S18. Binds to IF-3.

Its function is as follows. Located on the platform of the 30S subunit, it bridges several disparate RNA helices of the 16S rRNA. Forms part of the Shine-Dalgarno cleft in the 70S ribosome. This chain is Small ribosomal subunit protein uS11, found in Clostridium acetobutylicum (strain ATCC 824 / DSM 792 / JCM 1419 / IAM 19013 / LMG 5710 / NBRC 13948 / NRRL B-527 / VKM B-1787 / 2291 / W).